The primary structure comprises 146 residues: Large ribosomal subunit protein bL9 (146 aa).

Belongs to the bacterial ribosomal protein bL9 family.

Binds to the 23S rRNA. The polypeptide is Large ribosomal subunit protein bL9 (Deinococcus geothermalis (strain DSM 11300 / CIP 105573 / AG-3a)).